Consider the following 134-residue polypeptide: Ribonuclease VapC (134 aa).

Residues 4 to 124 (IVDTSIIIAL…NTKDFKRIPE (121 aa)) form the PINc domain. Residue Asp-6 participates in Mg(2+) binding.

Belongs to the PINc/VapC protein family. Requires Mg(2+) as cofactor.

Its function is as follows. Toxic component of a type II toxin-antitoxin (TA) system. Has ssRNase activity. Its RNase activity is partially neutralized by cognate antitoxin VapB. Rapidly induces apoptosis upon microinjection into mouse fibroblasts (L929 line). Probably contributes to host cell death if bacterial cell lysis occurs during host infection. This chain is Ribonuclease VapC, found in Rickettsia bellii (strain RML369-C).